The sequence spans 378 residues: Erythronate-4-phosphate dehydrogenase (378 aa).

The substrate site is built by Ser-45 and Thr-66. Residues Asp-146 and Thr-175 each coordinate NAD(+). The active site involves Arg-208. Asp-232 contacts NAD(+). Glu-237 is a catalytic residue. His-254 (proton donor) is an active-site residue. An NAD(+)-binding site is contributed by Gly-257. Tyr-258 serves as a coordination point for substrate.

Belongs to the D-isomer specific 2-hydroxyacid dehydrogenase family. PdxB subfamily. As to quaternary structure, homodimer.

The protein localises to the cytoplasm. The enzyme catalyses 4-phospho-D-erythronate + NAD(+) = (R)-3-hydroxy-2-oxo-4-phosphooxybutanoate + NADH + H(+). Its pathway is cofactor biosynthesis; pyridoxine 5'-phosphate biosynthesis; pyridoxine 5'-phosphate from D-erythrose 4-phosphate: step 2/5. Its function is as follows. Catalyzes the oxidation of erythronate-4-phosphate to 3-hydroxy-2-oxo-4-phosphonooxybutanoate. This chain is Erythronate-4-phosphate dehydrogenase, found in Shigella flexneri serotype 5b (strain 8401).